The sequence spans 277 residues: 5-formyltetrahydrofolate cyclo-ligase, mitochondrial (277 aa).

The transit peptide at 1–48 (MIGARVFCITTTALRRSPIFFFPKIPTRPVFRLSPATRPIVAMSTTSK) directs the protein to the mitochondrion. ATP is bound at residue 60 to 64 (KRVVR). Substrate contacts are provided by residues Glu-113 and 207 to 211 (RGGGY). Residues 206 to 213 (GRGGGYYD) and Asp-254 each bind ATP.

It belongs to the 5-formyltetrahydrofolate cyclo-ligase family. In terms of assembly, monomer.

The protein resides in the mitochondrion. It catalyses the reaction (6S)-5-formyl-5,6,7,8-tetrahydrofolate + ATP = (6R)-5,10-methenyltetrahydrofolate + ADP + phosphate. Its function is as follows. Contributes to tetrahydrofolate metabolism and photorespiration through the regulation of serine hydroxymethyltransferase. Prefers the pentalutamyl to the monoglutamyl form of 5-formyltetrahydrofolate. In Arabidopsis thaliana (Mouse-ear cress), this protein is 5-formyltetrahydrofolate cyclo-ligase, mitochondrial (5FCL).